Consider the following 455-residue polypeptide: Chromosomal replication initiator protein DnaA (455 aa).

A domain I, interacts with DnaA modulators region spans residues 1 to 73 (METSLETLWS…RDVVHEILGH (73 aa)). Residues 73–116 (HPVEIQIEIAQGDSNATISAPEVASPPPTASPVENTNTSQRQQA) are domain II. Residues 92 to 116 (APEVASPPPTASPVENTNTSQRQQA) form a disordered region. The span at 104–116 (PVENTNTSQRQQA) shows a compositional bias: polar residues. The domain III, AAA+ region stretch occupies residues 117–333 (SLNPKYVFSR…GALIRAVAYI (217 aa)). Residues Gly161, Gly163, Lys164, and Thr165 each contribute to the ATP site. Residues 334-455 (SISGLPMNVE…GDRIKLANQP (122 aa)) form a domain IV, binds dsDNA region.

This sequence belongs to the DnaA family. In terms of assembly, oligomerizes as a right-handed, spiral filament on DNA at oriC.

The protein localises to the cytoplasm. Its function is as follows. Plays an essential role in the initiation and regulation of chromosomal replication. ATP-DnaA binds to the origin of replication (oriC) to initiate formation of the DNA replication initiation complex once per cell cycle. Binds the DnaA box (a 9 base pair repeat at the origin) and separates the double-stranded (ds)DNA. Forms a right-handed helical filament on oriC DNA; dsDNA binds to the exterior of the filament while single-stranded (ss)DNA is stabiized in the filament's interior. The ATP-DnaA-oriC complex binds and stabilizes one strand of the AT-rich DNA unwinding element (DUE), permitting loading of DNA polymerase. After initiation quickly degrades to an ADP-DnaA complex that is not apt for DNA replication. Binds acidic phospholipids. The sequence is that of Chromosomal replication initiator protein DnaA from Acaryochloris marina (strain MBIC 11017).